The primary structure comprises 513 residues: Cytochrome P450 1A2 (513 aa).

Serine 68 carries an O-linked (GlcNAc) serine glycan. Substrate is bound at residue phenylalanine 225. Residue cysteine 456 coordinates heme.

It belongs to the cytochrome P450 family. As to quaternary structure, interacts with PGRMC1; the interaction requires PGRMC1 homodimerization. Requires heme as cofactor. As to expression, found in lung and liver.

It localises to the endoplasmic reticulum membrane. The protein resides in the microsome membrane. The enzyme catalyses an organic molecule + reduced [NADPH--hemoprotein reductase] + O2 = an alcohol + oxidized [NADPH--hemoprotein reductase] + H2O + H(+). It carries out the reaction 17beta-estradiol + reduced [NADPH--hemoprotein reductase] + O2 = 2-hydroxy-17beta-estradiol + oxidized [NADPH--hemoprotein reductase] + H2O + H(+). It catalyses the reaction 17beta-estradiol + reduced [NADPH--hemoprotein reductase] + O2 = 4-hydroxy-17beta-estradiol + oxidized [NADPH--hemoprotein reductase] + H2O + H(+). The catalysed reaction is estrone + reduced [NADPH--hemoprotein reductase] + O2 = 2-hydroxyestrone + oxidized [NADPH--hemoprotein reductase] + H2O + H(+). The enzyme catalyses estrone + reduced [NADPH--hemoprotein reductase] + O2 = 4-hydroxyestrone + oxidized [NADPH--hemoprotein reductase] + H2O + H(+). It carries out the reaction cholesterol + reduced [NADPH--hemoprotein reductase] + O2 = 25-hydroxycholesterol + oxidized [NADPH--hemoprotein reductase] + H2O + H(+). It catalyses the reaction all-trans-retinol + reduced [NADPH--hemoprotein reductase] + O2 = all-trans-retinal + oxidized [NADPH--hemoprotein reductase] + 2 H2O + H(+). The catalysed reaction is all-trans-retinal + reduced [NADPH--hemoprotein reductase] + O2 = all-trans-retinoate + oxidized [NADPH--hemoprotein reductase] + H2O + 2 H(+). The enzyme catalyses (5Z,8Z,11Z,14Z)-eicosatetraenoate + reduced [NADPH--hemoprotein reductase] + O2 = (14R,15S)-epoxy-(5Z,8Z,11Z)-eicosatrienoate + oxidized [NADPH--hemoprotein reductase] + H2O + H(+). It carries out the reaction (5Z,8Z,11Z,14Z)-eicosatetraenoate + reduced [NADPH--hemoprotein reductase] + O2 = (14S,15R)-epoxy-(5Z,8Z,11Z)-eicosatrienoate + oxidized [NADPH--hemoprotein reductase] + H2O + H(+). It catalyses the reaction (5Z,8Z,11Z,14Z,17Z)-eicosapentaenoate + reduced [NADPH--hemoprotein reductase] + O2 = (17R,18S)-epoxy-(5Z,8Z,11Z,14Z)-eicosatetraenoate + oxidized [NADPH--hemoprotein reductase] + H2O + H(+). The catalysed reaction is (4Z,7Z,10Z,13Z,16Z,19Z)-docosahexaenoate + reduced [NADPH--hemoprotein reductase] + O2 = (19R,20S)-epoxy-(4Z,7Z,10Z,13Z,16Z)-docosapentaenoate + oxidized [NADPH--hemoprotein reductase] + H2O + H(+). The enzyme catalyses (5S)-hydroperoxy-(6E,8Z,11Z,14Z)-eicosatetraenoate = 5-oxo-(6E,8Z,11Z,14Z)-eicosatetraenoate + H2O. It carries out the reaction (12S)-hydroperoxy-(5Z,8Z,10E,14Z)-eicosatetraenoate = 12-oxo-(5Z,8Z,10E,14Z)-eicosatetraenoate + H2O. It catalyses the reaction (15S)-hydroperoxy-(5Z,8Z,11Z,13E)-eicosatetraenoate = 15-oxo-(5Z,8Z,11Z,13E)-eicosatetraenoate + H2O. The catalysed reaction is (13S)-hydroperoxy-(9Z,11E)-octadecadienoate = 13-oxo-(9Z,11E)-octadecadienoate + H2O. The enzyme catalyses (5Z,8Z,11Z,14Z)-eicosatetraenoate + reduced [NADPH--hemoprotein reductase] + O2 = 13-hydroxy-(5Z,8Z,11Z,14Z)-eicosatetraenoate + oxidized [NADPH--hemoprotein reductase] + H2O + H(+). It carries out the reaction (5Z,8Z,11Z,14Z)-eicosatetraenoate + reduced [NADPH--hemoprotein reductase] + O2 = 19-hydroxy-(5Z,8Z,11Z,14Z)-eicosatetraenoate + oxidized [NADPH--hemoprotein reductase] + H2O + H(+). It catalyses the reaction (9Z,12Z)-octadecadienoate + reduced [NADPH--hemoprotein reductase] + O2 = 11-hydroxy-(9Z,12Z)-octadecadienoate + oxidized [NADPH--hemoprotein reductase] + H2O + H(+). Its pathway is cofactor metabolism; retinol metabolism. It participates in steroid metabolism; cholesterol metabolism. It functions in the pathway lipid metabolism; arachidonate metabolism. Functionally, a cytochrome P450 monooxygenase involved in the metabolism of various endogenous substrates, including fatty acids, steroid hormones and vitamins. Mechanistically, uses molecular oxygen inserting one oxygen atom into a substrate, and reducing the second into a water molecule, with two electrons provided by NADPH via cytochrome P450 reductase (NADPH--hemoprotein reductase). Catalyzes the hydroxylation of carbon-hydrogen bonds. Exhibits high catalytic activity for the formation of hydroxyestrogens from estrone (E1) and 17beta-estradiol (E2), namely 2-hydroxy E1 and E2. Metabolizes cholesterol toward 25-hydroxycholesterol, a physiological regulator of cellular cholesterol homeostasis. May act as a major enzyme for all-trans retinoic acid biosynthesis in the liver. Catalyzes two successive oxidative transformation of all-trans retinol to all-trans retinal and then to the active form all-trans retinoic acid. Primarily catalyzes stereoselective epoxidation of the last double bond of polyunsaturated fatty acids (PUFA), displaying a strong preference for the (R,S) stereoisomer. Catalyzes bisallylic hydroxylation and omega-1 hydroxylation of PUFA. May also participate in eicosanoids metabolism by converting hydroperoxide species into oxo metabolites (lipoxygenase-like reaction, NADPH-independent). Plays a role in the oxidative metabolism of xenobiotics. Catalyzes the N-hydroxylation of heterocyclic amines and the O-deethylation of phenacetin. Metabolizes caffeine via N3-demethylation. The sequence is that of Cytochrome P450 1A2 (CYP1A2) from Mesocricetus auratus (Golden hamster).